Consider the following 612-residue polypeptide: Peroxisomal targeting signal receptor (612 aa).

The residue at position 1 (M1) is an N-acetylmethionine. The disordered stretch occupies residues 1-24; sequence MDVGSCSVGNNPLAQLHKHTQQNK. Residue C6 forms a Glycyl cysteine thioester (Cys-Gly) (interchain with G-Cter in ubiquitin) linkage. The segment at 7-29 is amphipathic helix 1 (AH1); the sequence is SVGNNPLAQLHKHTQQNKSLQFN. Glycyl lysine isopeptide (Lys-Gly) (interchain with G-Cter in ubiquitin) cross-links involve residues K18 and K24. S61 carries the phosphoserine modification. The TPR 1 repeat unit spans residues 64 to 97; sequence NMANMQRFINGEPLIDDKRRMEIGPSSGRLPPFS. The tract at residues 70 to 104 is amphipathic helix 2 (AH2); that stretch reads RFINGEPLIDDKRRMEIGPSSGRLPPFSNVHSLQT. The short motif at 120 to 124 is the WxxxF/Y motif 1 element; the sequence is WSQEF. The interval 129–151 is disordered; the sequence is SIQNRNADTGNSEKAWQRGSTTA. The segment at 158–174 is amphipathic helix 3 (AH3); the sequence is PNTMMNNYAYASMNSLS. The tract at residues 182–202 is disordered; sequence AFMNQQQSGRSKEGVNEQEQQ. The WxxxF/Y motif 2 signature appears at 204–208; the sequence is WTDQF. The segment at 257–273 is amphipathic helix 4 (AH4); it reads FQEVWDSIHKDAEEVLP. TPR repeat units follow at residues 313 to 346, 347 to 380, 381 to 418, 419 to 456, 457 to 490, 491 to 524, and 525 to 558; these read PNAY…KPDH, VDAW…DPKN, LEAM…IWSR, IKQQ…STID, PEIQ…NPND, ELMW…KPSF, and VRAR…HEVN.

The protein belongs to the peroxisomal targeting signal receptor family. As to quaternary structure, interacts (via WxxxF/Y and LVxEF motifs) with PEX14; promoting translocation through the PEX13-PEX14 docking complex. Post-translationally, monoubiquitinated at Cys-6 by PEX2 during PEX5 passage through the retrotranslocation channel: monoubiquitination acts as a signal for PEX5 extraction and is required for proper export from peroxisomes and recycling. Ubiquitination at Cys-6 is UBC4-independent but requires the presence of PEX4. When PEX5 recycling is compromised, polyubiquitinated at Lys-18 and Lys-24 by PEX10 during its passage through the retrotranslocation channel, leading to its degradation. Ubiquitination at Lys-18 and Lys-24 are UBC4-dependent. Monoubiquitination at Cys-6 and polyubiquitination at Lys-18 and Lys-24 are removed by UBP15 in the cytosol, resetting PEX5 for a subsequent import cycle.

It is found in the cytoplasm. It localises to the cytosol. The protein localises to the peroxisome matrix. Its function is as follows. Receptor that mediates peroxisomal import of proteins containing a C-terminal PTS1-type tripeptide peroxisomal targeting signal (SKL-type). Binds to cargo proteins containing a PTS1 peroxisomal targeting signal in the cytosol, and translocates them into the peroxisome matrix by passing through the PEX13-PEX14 docking complex along with cargo proteins. PEX5 receptor is then retrotranslocated into the cytosol, leading to release of bound cargo in the peroxisome matrix, and reset for a subsequent peroxisome import cycle. In Saccharomyces cerevisiae (strain ATCC 204508 / S288c) (Baker's yeast), this protein is Peroxisomal targeting signal receptor.